The following is a 181-amino-acid chain: Oligoribonuclease (181 aa).

Positions 8 to 171 (LIWVDLEMTG…VDIQESIAEL (164 aa)) constitute an Exonuclease domain. Y129 is a catalytic residue.

It belongs to the oligoribonuclease family.

It is found in the cytoplasm. 3'-to-5' exoribonuclease specific for small oligoribonucleotides. The protein is Oligoribonuclease of Shewanella loihica (strain ATCC BAA-1088 / PV-4).